The following is a 648-amino-acid chain: 1-deoxy-D-xylulose-5-phosphate synthase (648 aa).

Thiamine diphosphate contacts are provided by residues histidine 74 and 115-117 (GHA). Mg(2+) is bound at residue aspartate 146. Residues 147–148 (GA), asparagine 176, tyrosine 292, and glutamate 375 contribute to the thiamine diphosphate site. Asparagine 176 contacts Mg(2+).

It belongs to the transketolase family. DXPS subfamily. As to quaternary structure, homodimer. Mg(2+) is required as a cofactor. Requires thiamine diphosphate as cofactor.

The enzyme catalyses D-glyceraldehyde 3-phosphate + pyruvate + H(+) = 1-deoxy-D-xylulose 5-phosphate + CO2. It participates in metabolic intermediate biosynthesis; 1-deoxy-D-xylulose 5-phosphate biosynthesis; 1-deoxy-D-xylulose 5-phosphate from D-glyceraldehyde 3-phosphate and pyruvate: step 1/1. Its function is as follows. Catalyzes the acyloin condensation reaction between C atoms 2 and 3 of pyruvate and glyceraldehyde 3-phosphate to yield 1-deoxy-D-xylulose-5-phosphate (DXP). In Synechococcus sp. (strain JA-2-3B'a(2-13)) (Cyanobacteria bacterium Yellowstone B-Prime), this protein is 1-deoxy-D-xylulose-5-phosphate synthase.